The following is a 233-amino-acid chain: Ribonuclease 3 (233 aa).

An RNase III domain is found at 4–126; that stretch reads LNKLMERLGH…IVGAIYIDAG (123 aa). Glu-39 is a binding site for Mg(2+). Asp-43 is an active-site residue. 2 residues coordinate Mg(2+): Asp-112 and Glu-115. Glu-115 is an active-site residue. One can recognise a DRBM domain in the interval 153-222; the sequence is DAKSLLQEWL…AKRFLELLDD (70 aa).

It belongs to the ribonuclease III family. As to quaternary structure, homodimer. The cofactor is Mg(2+).

It localises to the cytoplasm. The enzyme catalyses Endonucleolytic cleavage to 5'-phosphomonoester.. Its function is as follows. Digests double-stranded RNA. Involved in the processing of primary rRNA transcript to yield the immediate precursors to the large and small rRNAs (23S and 16S). Processes some mRNAs, and tRNAs when they are encoded in the rRNA operon. Processes pre-crRNA and tracrRNA of type II CRISPR loci if present in the organism. This is Ribonuclease 3 from Coxiella burnetii (strain Dugway 5J108-111).